The sequence spans 173 residues: bZIP transcription factor 44 (173 aa).

A disordered region spans residues 1–65 (MNNKTEMGSS…SRMRKQKHLD (65 aa)). A compositionally biased stretch (low complexity) spans 8-22 (GSSTSGNCSSVSTTG). A compositionally biased stretch (basic and acidic residues) spans 30-41 (SDLRQRDLIDER). Residues 39-102 (DERKRKRKQS…VTIEAENDIL (64 aa)) enclose the bZIP domain. The tract at residues 41–62 (RKRKRKQSNRESARRSRMRKQK) is basic motif. Positions 67–81 (LTAQVTHLRKENAQI) are leucine-zipper.

Forms heterodimers with BZIP1, BZIP9, BZIP10, BZIP25 and BZIP63. Expressed in the micropylar endosperm and radicle tip in early germinating seeds.

It localises to the nucleus. Transcription factor that binds to the DNA G-box motif 5'-CACGTG-3' of MAN7 promoter. Involved in the positive regulation of seed germination through MAN7 gene activation. MAN7 is required for both, loosening of the micropylar endosperm, and rupture of the seed coat in germinating seeds. In Arabidopsis thaliana (Mouse-ear cress), this protein is bZIP transcription factor 44.